The following is a 369-amino-acid chain: Porphobilinogen deaminase, chloroplastic (369 aa).

The transit peptide at 1–46 (MEMTLYSSSSFSLPSAPSNPSLSLFTSSFRFSSFKTSPFSKCRIRA) directs the protein to the chloroplast. The residue at position 303 (Cys-303) is an S-(dipyrrolylmethanemethyl)cysteine.

This sequence belongs to the HMBS family. It depends on dipyrromethane as a cofactor.

Its subcellular location is the plastid. The protein resides in the chloroplast. It carries out the reaction 4 porphobilinogen + H2O = hydroxymethylbilane + 4 NH4(+). It participates in porphyrin-containing compound metabolism; protoporphyrin-IX biosynthesis; coproporphyrinogen-III from 5-aminolevulinate: step 2/4. Its pathway is porphyrin-containing compound metabolism; chlorophyll biosynthesis. Tetrapolymerization of the monopyrrole PBG into the hydroxymethylbilane pre-uroporphyrinogen in several discrete steps. In Pisum sativum (Garden pea), this protein is Porphobilinogen deaminase, chloroplastic (HEMC).